Here is a 557-residue protein sequence, read N- to C-terminus: Elongator complex protein 3 (557 aa).

A Radical SAM core domain is found at 91-381 (RTASGIAVVA…YRVQRDIPMP (291 aa)). Residues C108, C118, and C121 each contribute to the [4Fe-4S] cluster site. Residue K173 coordinates acetyl-CoA. The 153-residue stretch at 405-557 (TTCRDVRTRE…LDGPYMSKRI (153 aa)) folds into the N-acetyltransferase domain. Residue K453 forms a Glycyl lysine isopeptide (Lys-Gly) (interchain with G-Cter in ubiquitin) linkage. Acetyl-CoA is bound by residues 485 to 488 (ELHV), 508 to 510 (FGT), and Y541.

Belongs to the ELP3 family. Component of the elongator complex which consists of ELP1/IKI3, ELP2, ELP3, ELP4, ELP5/IKI1 and ELP6. The elongator complex is composed of two copies of the Elp123 subcomplex (composed of ELP1/IKI3, ELP2 and ELP3) and two copies of the Elp456 subcomplex (composed of ELP4, ELP5/IKI1 and ELP6). The Elp123 subcomplex forms a two-lobed scaffold, which binds the Elp456 subcomplex asymmetrically. In each lobe, ELP2 is tightly sandwiched between ELP1/IKI3 and ELP3. The Elp123 subcomplex binds tRNA through ELP1/IKI3 and ELP3 and can bind 2 tRNAs simultaneously. tRNA-binding induces conformational rearrangements which precisely position the targeted anticodon base in the active site. ELP3 interacts with KTI11/DPH3. ELP3 interacts with KTI12. The Elp456 subcomplex binds tRNA and has ATPase activity. [4Fe-4S] cluster serves as cofactor.

The protein resides in the cytoplasm. It localises to the nucleus. It carries out the reaction uridine(34) in tRNA + acetyl-CoA + S-adenosyl-L-methionine + H2O = 5-(carboxymethyl)uridine(34) in tRNA + 5'-deoxyadenosine + L-methionine + CoA + 2 H(+). It functions in the pathway tRNA modification; 5-methoxycarbonylmethyl-2-thiouridine-tRNA biosynthesis. Functionally, catalytic tRNA acetyltransferase subunit of the elongator complex which is required for multiple tRNA modifications, including mcm5U (5-methoxycarbonylmethyl uridine), mcm5s2U (5-methoxycarbonylmethyl-2-thiouridine), and ncm5U (5-carbamoylmethyl uridine). In the elongator complex, acts as a tRNA uridine(34) acetyltransferase, which mediates formation of carboxymethyluridine in the wobble base at position 34 in tRNAs. The complex functions as a gamma-toxin target (TOT); disruption of the complex confers resistance to Kluyveromyces lactis toxin zymocin (pGKL1 killer toxin). May also be involved in sensitivity to Pichia inositovora toxin. Independently, ELP3 may be involved in polarized exocytosis. The sequence is that of Elongator complex protein 3 from Saccharomyces cerevisiae (strain ATCC 204508 / S288c) (Baker's yeast).